Here is a 397-residue protein sequence, read N- to C-terminus: Elongation factor Tu (397 aa).

Residues 10–206 (KPHVNIGTIG…HIDTYIPEPT (197 aa)) form the tr-type G domain. Residues 19–26 (GHVDHGKT) are G1. Position 19-26 (19-26 (GHVDHGKT)) interacts with GTP. Thr26 serves as a coordination point for Mg(2+). The G2 stretch occupies residues 61-65 (GITIS). The tract at residues 82 to 85 (DCPG) is G3. GTP-binding positions include 82–86 (DCPGH) and 137–140 (NKCD). The G4 stretch occupies residues 137–140 (NKCD). The interval 175 to 177 (SAL) is G5.

This sequence belongs to the TRAFAC class translation factor GTPase superfamily. Classic translation factor GTPase family. EF-Tu/EF-1A subfamily. Monomer.

It localises to the cytoplasm. The enzyme catalyses GTP + H2O = GDP + phosphate + H(+). Functionally, GTP hydrolase that promotes the GTP-dependent binding of aminoacyl-tRNA to the A-site of ribosomes during protein biosynthesis. The protein is Elongation factor Tu of Alkaliphilus oremlandii (strain OhILAs) (Clostridium oremlandii (strain OhILAs)).